A 136-amino-acid polypeptide reads, in one-letter code: Large ribosomal subunit protein bL12 (136 aa).

Belongs to the bacterial ribosomal protein bL12 family. In terms of assembly, homodimer. Part of the ribosomal stalk of the 50S ribosomal subunit. Forms a multimeric L10(L12)X complex, where L10 forms an elongated spine to which 2 to 4 L12 dimers bind in a sequential fashion. Binds GTP-bound translation factors.

Forms part of the ribosomal stalk which helps the ribosome interact with GTP-bound translation factors. Is thus essential for accurate translation. The sequence is that of Large ribosomal subunit protein bL12 from Synechococcus sp. (strain JA-2-3B'a(2-13)) (Cyanobacteria bacterium Yellowstone B-Prime).